A 1027-amino-acid chain; its full sequence is Fibril-forming collagen alpha chain (1027 aa).

The interval 1–12 (YRAGPRYIQAQV) is nonhelical region (N-terminal). The tract at residues 1–1027 (YRAGPRYIQA…GPPGNSDYGA (1027 aa)) is disordered. Residues 13–1023 (GPIGPRGPPG…PGPPGPPGNS (1011 aa)) form a triple-helical region region. Positions 17 to 26 (PRGPPGPPGS) are enriched in pro residues. 4-hydroxyproline; partial is present on residues proline 21 and proline 24. 4-hydroxyproline is present on residues proline 27 and proline 39. Proline 53 bears the 3-hydroxyproline; partial mark. Proline 54 carries the post-translational modification 4-hydroxyproline. Residues 63 to 72 (SGDDGRDGEP) are compositionally biased toward basic and acidic residues. Proline 72 carries the post-translational modification 4-hydroxyproline; partial. Residues 73-91 (GPRGGIGPMGPRGAGGMPG) are compositionally biased toward gly residues. Residues proline 90 and proline 93 each carry the 4-hydroxyproline modification. A 5-hydroxylysine mark is found at lysine 96 and lysine 108. O-linked (Gal...) hydroxylysine glycans are attached at residues lysine 96 and lysine 108. Residues proline 123 and proline 128 each carry the 4-hydroxyproline; partial modification. The residue at position 150 (proline 150) is a 4-hydroxyproline. Position 161 is a 3-hydroxyproline; partial (proline 161). Proline 162 is modified (4-hydroxyproline). The residue at position 164 (proline 164) is a 3-hydroxyproline; partial. 4-hydroxyproline occurs at positions 165, 174, 177, and 180. The segment covering 168-182 (IGSTGSPGFPGTPGS) has biased composition (low complexity). Residues lysine 183 and lysine 192 each carry the 5-hydroxylysine modification. A glycan (O-linked (Gal...) hydroxylysine) is linked at lysine 192. Residues proline 207, proline 216, proline 219, proline 228, and proline 237 each carry the 4-hydroxyproline modification. Over residues 227 to 249 (EPGASGESGLPGPSGFPGPRGMP) the composition is skewed to low complexity. Proline 243 carries the post-translational modification 4-hydroxyproline; partial. 4-hydroxyproline occurs at positions 249 and 255. Residues 259–268 (GAKGDGGPTG) are compositionally biased toward gly residues. The residue at position 261 (lysine 261) is a 5-hydroxylysine. O-linked (Gal...) hydroxylysine glycosylation occurs at lysine 261. A 4-hydroxyproline; partial mark is found at proline 273 and proline 276. Lysine 279 carries the 5-hydroxylysine modification. O-linked (Gal...) hydroxylysine glycosylation is present at lysine 279. 4-hydroxyproline; partial occurs at positions 285, 291, and 303. A 4-hydroxyproline mark is found at proline 306, proline 312, proline 321, proline 327, and proline 339. Lysine 342 is subject to 5-hydroxylysine. 4-hydroxyproline; partial is present on proline 348. The residue at position 351 (lysine 351) is a 5-hydroxylysine; partial. 3 positions are modified to 4-hydroxyproline: proline 366, proline 372, and proline 375. Residues 380 to 396 (RPGKDGRPGIRGKDGKQ) are compositionally biased toward basic and acidic residues. At proline 381 the chain carries 4-hydroxyproline; partial. Proline 387 is modified (4-hydroxyproline). The segment covering 398 to 420 (EQGPQGPQGLAGLQGRAGPPGAR) has biased composition (low complexity). Proline 416 is modified (3-hydroxyproline; partial). 4-hydroxyproline is present on residues proline 417, proline 423, proline 429, and proline 432. Residues 437–446 (EQGDAGKDGE) show a composition bias toward basic and acidic residues. The segment covering 447–480 (TGAAGPPGAAGPTGARGPPGPRGQQGFQGLAGAQ) has biased composition (low complexity). Residues proline 453, proline 465, and proline 483 each carry the 4-hydroxyproline modification. 4-hydroxyproline; partial occurs at positions 500, 503, and 506. The segment covering 502–511 (GPAGPGGERG) has biased composition (gly residues). A 4-hydroxyproline mark is found at proline 513 and proline 525. The span at 527-543 (ERGATGPAGPTGSPGVA) shows a compositional bias: low complexity. 2 positions are modified to 4-hydroxyproline; partial: proline 533 and proline 536. Proline 540 carries the 4-hydroxyproline modification. 5-hydroxylysine is present on lysine 546. Proline 551 carries the post-translational modification 3-hydroxyproline; partial. 4-hydroxyproline is present on residues proline 552 and proline 561. A 5-hydroxylysine mark is found at lysine 567 and lysine 573. O-linked (Gal...) hydroxylysine glycosylation occurs at lysine 573. A compositionally biased stretch (basic and acidic residues) spans 575-599 (SRGDIGPRGKAGERGKDGERGERGE). Position 603 is a 4-hydroxyproline (proline 603). Position 612 is a 5-hydroxylysine (lysine 612). O-linked (Gal...) hydroxylysine glycosylation occurs at lysine 612. At proline 621 the chain carries 4-hydroxyproline; partial. The residue at position 627 (proline 627) is a 4-hydroxyproline. The span at 635–644 (PAGSQGIQGQ) shows a compositional bias: low complexity. Proline 645 carries the 4-hydroxyproline; partial modification. Proline 647 is modified (3-hydroxyproline; partial). 4-hydroxyproline is present on proline 648. At lysine 657 the chain carries 5-hydroxylysine. Lysine 657 carries an O-linked (Gal...) hydroxylysine glycan. 4-hydroxyproline occurs at positions 663, 708, 711, 714, 717, and 723. A compositionally biased stretch (low complexity) spans 698–710 (ETGAQGEIGLPGS). The segment covering 714-726 (PGLPGPSGQPGPS) has biased composition (pro residues). Lysine 738 is modified (5-hydroxylysine). Residue lysine 738 is glycosylated (O-linked (Gal...) hydroxylysine). Proline 744 and proline 759 each carry 4-hydroxyproline. The span at 750–771 (QGDRGSDGEPGRDGTKGERGED) shows a compositional bias: basic and acidic residues. Lysine 765 carries the post-translational modification 5-hydroxylysine. Lysine 765 carries an O-linked (Gal...) hydroxylysine glycan. Proline 773 carries the 3-hydroxyproline; partial modification. A 4-hydroxyproline mark is found at proline 774, proline 783, and proline 792. Gly residues predominate over residues 802 to 814 (GPMGGQGMKGDGG). 5-hydroxylysine is present on lysine 810. The O-linked (Gal...) hydroxylysine glycan is linked to lysine 810. A 3-hydroxyproline; partial modification is found at proline 815. 4-hydroxyproline is present on residues proline 816, proline 843, proline 849, proline 855, proline 861, proline 867, proline 888, proline 894, proline 903, and proline 915. Over residues 828-848 (AGPQGPTGPSGQAGAPGQEGA) the composition is skewed to low complexity. Residues 884–894 (QRGLPGAAGPP) are compositionally biased toward low complexity. Residues 911–927 (PVGAPGSQGPAGIMGMK) are compositionally biased toward low complexity. Lysine 927 is subject to 5-hydroxylysine. Residue lysine 927 is glycosylated (O-linked (Gal...) hydroxylysine). Lysine 933 carries the 5-hydroxylysine; partial modification. Residues lysine 936 and lysine 939 each carry the 5-hydroxylysine modification. Lysine 936 carries O-linked (Gal...) hydroxylysine glycosylation. Low complexity predominate over residues 942-962 (TGLPGLQGLQGTPGHSGESGP). The residue at position 945 (proline 945) is a 4-hydroxyproline. A 4-hydroxyproline; partial modification is found at proline 954. 4-hydroxyproline occurs at positions 963 and 966. A compositionally biased stretch (gly residues) spans 973–982 (GEAGGRGSQG). The segment covering 983–1001 (PPGKDGQPGPSGRVGPRGP) has biased composition (low complexity). 4-hydroxyproline is present on residues proline 984 and proline 990. Position 1010 is a 3-hydroxyproline; partial (proline 1010). Positions 1010–1020 (PPGPPGPPGPP) are enriched in pro residues. 4-hydroxyproline is present on proline 1011. A 3-hydroxyproline; partial modification is found at proline 1013. Proline 1014 carries the post-translational modification 4-hydroxyproline. Position 1016 is a 3-hydroxyproline; partial (proline 1016). Proline 1017 bears the 4-hydroxyproline mark. Proline 1019 carries the post-translational modification 3-hydroxyproline; partial. A 4-hydroxyproline modification is found at proline 1020. Residues 1024 to 1027 (DYGA) form a nonhelical region (C-terminal) region.

As to quaternary structure, homotetramer.

Its subcellular location is the secreted. It localises to the extracellular space. The protein resides in the extracellular matrix. In terms of biological role, fibril-forming collagen. In Riftia pachyptila (Vent tube worm), this protein is Fibril-forming collagen alpha chain.